The chain runs to 259 residues: Global transcriptional regulator CodY (259 aa).

The interval 1-155 is GAF domain; it reads MNLLQKTRKI…GATVVGMEIL (155 aa). The segment at residues 203–222 is a DNA-binding region (H-T-H motif); sequence ASKIADRVGITRSVIVNALR. Residue Ser215 is modified to Phosphoserine.

The protein belongs to the CodY family.

It localises to the cytoplasm. In terms of biological role, DNA-binding global transcriptional regulator which is involved in the adaptive response to starvation and acts by directly or indirectly controlling the expression of numerous genes in response to nutrient availability. During rapid exponential growth, CodY is highly active and represses genes whose products allow adaptation to nutrient depletion. This chain is Global transcriptional regulator CodY, found in Geobacillus sp. (strain WCH70).